The chain runs to 252 residues: Endonuclease NucS (252 aa).

Belongs to the NucS endonuclease family.

It localises to the cytoplasm. In terms of biological role, cleaves both 3' and 5' ssDNA extremities of branched DNA structures. The chain is Endonuclease NucS from Sulfurisphaera tokodaii (strain DSM 16993 / JCM 10545 / NBRC 100140 / 7) (Sulfolobus tokodaii).